Reading from the N-terminus, the 173-residue chain is Adenine phosphoribosyltransferase (173 aa).

This sequence belongs to the purine/pyrimidine phosphoribosyltransferase family. In terms of assembly, homodimer.

The protein localises to the cytoplasm. It catalyses the reaction AMP + diphosphate = 5-phospho-alpha-D-ribose 1-diphosphate + adenine. It participates in purine metabolism; AMP biosynthesis via salvage pathway; AMP from adenine: step 1/1. Catalyzes a salvage reaction resulting in the formation of AMP, that is energically less costly than de novo synthesis. The polypeptide is Adenine phosphoribosyltransferase (Petrotoga mobilis (strain DSM 10674 / SJ95)).